The sequence spans 173 residues: MIDADGFRANVGIILANTQGQVLWAKRVGHDSWQFPQGGIDEGETPLDAMYRELWEEVGLYPRHVQLLAATDNWLRYRLPKRYIRHGQHPLCIGQKQKWFLLKLDEPNTEHIRFDTAKPEFDHWEWVSYWYPLGQVVHFKRGVYRRALRELARELPLKKELILPETKNHLLQV.

In terms of domain architecture, Nudix hydrolase spans 6–149 (GFRANVGIIL…KRGVYRRALR (144 aa)). The Nudix box signature appears at 38–59 (GGIDEGETPLDAMYRELWEEVG).

The protein belongs to the Nudix hydrolase family. RppH subfamily. It depends on a divalent metal cation as a cofactor.

Accelerates the degradation of transcripts by removing pyrophosphate from the 5'-end of triphosphorylated RNA, leading to a more labile monophosphorylated state that can stimulate subsequent ribonuclease cleavage. The polypeptide is RNA pyrophosphohydrolase (Psychrobacter sp. (strain PRwf-1)).